A 297-amino-acid chain; its full sequence is MGAQLRVYRQRIKSTQSMGKLFKAMELIATSRISKARSRVQASLPYANAITRAVSVVASQSEIHHPLTTEPEQILRAAVLVLTSNRGLAGSYSASVLKQAEQLNTLLQADGKEVKTYLVGNKAQAYFQFRNRSFTKAWVNPTDAPEFATAQEISKTLLEDFAEEFEKDGVDEIHVVYTRFKSMVVQEPTVIRLLPLEVSEEEVSESSDLLPLYEYEPEPEAVLDALLPRYIEARIFNVMLQAAASELAARQRAMKSASDNARDLVKKFTRLANTARQAEITQELSEIVAGADSLNAS.

It belongs to the ATPase gamma chain family. In terms of assembly, F-type ATPases have 2 components, CF(1) - the catalytic core - and CF(0) - the membrane proton channel. CF(1) has five subunits: alpha(3), beta(3), gamma(1), delta(1), epsilon(1). CF(0) has three main subunits: a, b and c.

It is found in the cell membrane. Its function is as follows. Produces ATP from ADP in the presence of a proton gradient across the membrane. The gamma chain is believed to be important in regulating ATPase activity and the flow of protons through the CF(0) complex. This is ATP synthase gamma chain from Renibacterium salmoninarum (strain ATCC 33209 / DSM 20767 / JCM 11484 / NBRC 15589 / NCIMB 2235).